The primary structure comprises 462 residues: Lysyl endopeptidase (462 aa).

An N-terminal signal peptide occupies residues 1 to 24 (MHKRTYLNACLVLALAAGASQALA). Positions 25-211 (APGASEMAGD…VSYFADSLYK (187 aa)) are excised as a propeptide. 3 cysteine pairs are disulfide-bonded: Cys224-Cys435, Cys230-Cys305, and Cys262-Cys284. Residues His283, Asp333, and Ser409 each act as charge relay system in the active site.

The protein belongs to the peptidase S1 family. Experiments performed in E.coli. Processing of pro-endopeptidase to mature endopeptidase is probably autocatalytic, as mutations in the probable active site residues prevent processing, and purified inactive pro-endopeptidase disappears in the presence of active endopeptidase.

The protein localises to the secreted. It carries out the reaction Preferential cleavage: Lys-|-Xaa, including Lys-|-Pro.. Its function is as follows. Lysine-specific endoprotease. Involved in corneal virulence. This chain is Lysyl endopeptidase (prpL), found in Pseudomonas aeruginosa (strain ATCC 15692 / DSM 22644 / CIP 104116 / JCM 14847 / LMG 12228 / 1C / PRS 101 / PAO1).